Reading from the N-terminus, the 559-residue chain is Small ribosomal subunit protein bS1 (559 aa).

6 consecutive S1 motif domains span residues 21–87 (GSII…LSRE), 105–171 (SETV…VSRR), 192–260 (GIEI…LGLK), 277–347 (GIKL…LGLK), 364–434 (GIHV…LGIK), and 451–520 (GAII…LTFH).

It belongs to the bacterial ribosomal protein bS1 family.

Functionally, binds mRNA; thus facilitating recognition of the initiation point. It is needed to translate mRNA with a short Shine-Dalgarno (SD) purine-rich sequence. The protein is Small ribosomal subunit protein bS1 (rpsA) of Buchnera aphidicola subsp. Schizaphis graminum (strain Sg).